The sequence spans 470 residues: MVLTEMSLDYSNRVLGSQKDNVKQMDKEETQQKENMLFSSQEYAAKLQKENMTLMKALAHRNKLVELSGIEIQKLRINLRSVQEKNLQLAQANSQMLAELNTNRDRLKDLQHELGCKNALLKVKKHLEEQVLPRTHHESKDKVSASASDGDCKSFQVHDIKHKDTKRKRTTRIKSSVSADVKPIPVNDSNSKANRKRRVSGVIDTTGIPEEICQTEDDIDKGVVSRGVNQDIDNVVNKKFVPDAANPVKESVHRKRQCTRRQSTRFDVQETKQTEKLLEMDGAKESKETASFSLRRRSARLRHEEAEPCKSLHEGDEVRETIKRRRVSLRLSARFDIQEPHVTETSNADDARSIVIEESAGSRSESVEPSESRHETKEITRKRSFSTRRQSTKGKSQTDEAIKEIATDPSLVNTIVQECDQETESKDKPKADENEGMTRRSSVGRPSRHAAEKVQSYREVSLRVKMRRKC.

A coiled-coil region spans residues 72-113 (IQKLRINLRSVQEKNLQLAQANSQMLAELNTNRDRLKDLQHE). 2 stretches are compositionally biased toward basic and acidic residues: residues 131–143 (VLPR…KDKV) and 150–162 (GDCK…DIKH). Disordered stretches follow at residues 131 to 176 (VLPR…IKSS) and 358 to 470 (ESAG…RRKC). Basic residues predominate over residues 163–172 (KDTKRKRTTR). A compositionally biased stretch (basic and acidic residues) spans 370-381 (SESRHETKEITR). The span at 382 to 392 (KRSFSTRRQST) shows a compositional bias: basic residues. Composition is skewed to basic and acidic residues over residues 396–406 (SQTDEAIKEIA), 423–438 (TESK…EGMT), and 449–462 (HAAE…EVSL).

This sequence belongs to the shugoshin family.

Its function is as follows. Dispensable for both meiotic and mitotic cell cycle progression. Required with SGO1 for full protection of centromeric cohesion during anaphase I. Required to prevent precocious release of pericentromeric cohesins during meiosis. Acts redundantly to SGO1. This chain is SHUGOSHIN 2, found in Arabidopsis thaliana (Mouse-ear cress).